Consider the following 667-residue polypeptide: Leucine aminopeptidase 2 (667 aa).

A peptide-binding positions include 188-190 (QCQ) and 318-323 (PYGGME). His-347 serves as a coordination point for Zn(2+). The active-site Proton acceptor is the Glu-348. 2 residues coordinate Zn(2+): His-351 and Glu-370. Tyr-436 (proton donor) is an active-site residue.

This sequence belongs to the peptidase M1 family. Zn(2+) serves as cofactor.

The protein localises to the cytoplasm. It localises to the nucleus. It catalyses the reaction an epoxide + H2O = an ethanediol. Its function is as follows. Aminopeptidase that preferentially cleaves di- and tripeptides. Also has low epoxide hydrolase activity (in vitro). Can hydrolyze the epoxide leukotriene LTA(4) but it forms preferentially 5,6-dihydroxy-7,9,11,14-eicosatetraenoic acid rather than the cytokine leukotriene B(4) as the product compared to the homologous mammalian enzyme (in vitro). The sequence is that of Leucine aminopeptidase 2 (ara-1) from Neurospora crassa (strain ATCC 24698 / 74-OR23-1A / CBS 708.71 / DSM 1257 / FGSC 987).